We begin with the raw amino-acid sequence, 305 residues long: uncharacterized protein (305 aa).

Residues 255 to 305 (RCHRAGLRSPPRTREPLWSLGPSGGEAAGEAPGGKGPPTPVLPHARRAGAA) form a disordered region. Gly residues predominate over residues 276–288 (PSGGEAAGEAPGG).

This is an uncharacterized protein from Streptomyces fradiae (Streptomyces roseoflavus).